Here is a 672-residue protein sequence, read N- to C-terminus: Acetoacetyl-CoA synthetase (672 aa).

This sequence belongs to the ATP-dependent AMP-binding enzyme family. As to expression, abundant in male subcutaneous white adipose tissue after weaning. In white adipose tissue, it is preferentially detected in mature adipocytes but not in preadipocytes. The expression in primary preadipocytes increases during the adipocyte differentiation. In brain, it is expressed in the midbrain, pons/medulla, cerebral cortex, hippocampus and cerebellum. The expression in the cerebellum is restricted primarily to glial cells, while in the cerebral cortex, it is restricted to neuronal cells.

It localises to the cytoplasm. The protein localises to the cytosol. It carries out the reaction acetoacetate + ATP + CoA = acetoacetyl-CoA + AMP + diphosphate. In terms of biological role, converts acetoacetate to acetoacetyl-CoA in the cytosol. Ketone body-utilizing enzyme, responsible for the synthesis of cholesterol and fatty acids. The protein is Acetoacetyl-CoA synthetase (Aacs) of Rattus norvegicus (Rat).